The chain runs to 351 residues: Porphobilinogen deaminase (351 aa).

An S-(dipyrrolylmethanemethyl)cysteine modification is found at Cys-242. The 50-residue stretch at 257–306 (PRHLSKLAYREVLEGNTEALATAAYKSNRTDASTGLTYKLPLEVEFGKVS) folds into the RPE1 insert domain.

This sequence belongs to the HMBS family. In terms of assembly, monomer. Dipyrromethane is required as a cofactor.

The enzyme catalyses 4 porphobilinogen + H2O = hydroxymethylbilane + 4 NH4(+). It functions in the pathway porphyrin-containing compound metabolism; protoporphyrin-IX biosynthesis; coproporphyrinogen-III from 5-aminolevulinate: step 2/4. Functionally, tetrapolymerization of the monopyrrole PBG into the hydroxymethylbilane pre-uroporphyrinogen in several discrete steps. The sequence is that of Porphobilinogen deaminase from Rickettsia conorii (strain ATCC VR-613 / Malish 7).